A 219-amino-acid polypeptide reads, in one-letter code: Ribosomal RNA small subunit methyltransferase G (219 aa).

S-adenosyl-L-methionine-binding residues include Gly-81, Leu-86, and Arg-150.

It belongs to the methyltransferase superfamily. RNA methyltransferase RsmG family.

Its subcellular location is the cytoplasm. The enzyme catalyses guanosine(527) in 16S rRNA + S-adenosyl-L-methionine = N(7)-methylguanosine(527) in 16S rRNA + S-adenosyl-L-homocysteine. Specifically methylates the N7 position of guanine in position 527 of 16S rRNA. The polypeptide is Ribosomal RNA small subunit methyltransferase G (Magnetococcus marinus (strain ATCC BAA-1437 / JCM 17883 / MC-1)).